The chain runs to 593 residues: Inactive metallocarboxypeptidase ECM14 (593 aa).

The first 22 residues, 1–22 (MHFSVRLSLLLTLASSLPLVSA), serve as a signal peptide directing secretion. Residues 23 to 184 (IPQHEDQAYT…QTIYESYPKT (162 aa)) constitute a propeptide that is removed on maturation. Residues 180-210 (SYPKTNPSSPSQQGPTTRRFSPSASTSKTKP) form a disordered region. The segment covering 182 to 210 (PKTNPSSPSQQGPTTRRFSPSASTSKTKP) has biased composition (polar residues). The 327-residue stretch at 220-546 (DYQPLSVLLP…RAMVAMGKFL (327 aa)) folds into the Peptidase M14 domain. Zn(2+) is bound by residues H285 and E288. Substrate is bound by residues 285–288 (HARE), R343, and 360–361 (DH). A disulfide bridge links C354 with C377. N370 carries N-linked (GlcNAc...) asparagine glycosylation. Residue H417 coordinates Zn(2+). 418 to 419 (SY) provides a ligand contact to substrate. A disordered region spans residues 557–593 (NGPHAAEETQNYDDDFEEDEAEEDSDVFRAQGDDMSS). The span at 566–581 (QNYDDDFEEDEAEEDS) shows a compositional bias: acidic residues.

It belongs to the peptidase M14 family. Requires Zn(2+) as cofactor.

Its subcellular location is the vacuole. The protein localises to the secreted. In terms of biological role, inactive carboxypeptidase that may play a role in cell wall organization and biogenesis. The polypeptide is Inactive metallocarboxypeptidase ECM14 (ECM14) (Arthroderma gypseum (strain ATCC MYA-4604 / CBS 118893) (Microsporum gypseum)).